The primary structure comprises 93 residues: Large ribosomal subunit protein uL23 (93 aa).

The protein belongs to the universal ribosomal protein uL23 family. In terms of assembly, part of the 50S ribosomal subunit. Contacts protein L29, and trigger factor when it is bound to the ribosome.

Functionally, one of the early assembly proteins it binds 23S rRNA. One of the proteins that surrounds the polypeptide exit tunnel on the outside of the ribosome. Forms the main docking site for trigger factor binding to the ribosome. The protein is Large ribosomal subunit protein uL23 of Campylobacter jejuni subsp. jejuni serotype O:6 (strain 81116 / NCTC 11828).